We begin with the raw amino-acid sequence, 397 residues long: Phosphoglycerate kinase (397 aa).

Substrate is bound by residues 21–23, arginine 37, 60–63, arginine 119, and arginine 152; these read DFN and HLGR. Residues lysine 203, glycine 294, glutamate 325, and 354–357 each bind ATP; that span reads GGDS.

This sequence belongs to the phosphoglycerate kinase family. Monomer.

It localises to the cytoplasm. The enzyme catalyses (2R)-3-phosphoglycerate + ATP = (2R)-3-phospho-glyceroyl phosphate + ADP. It functions in the pathway carbohydrate degradation; glycolysis; pyruvate from D-glyceraldehyde 3-phosphate: step 2/5. The protein is Phosphoglycerate kinase of Chlorobium limicola (strain DSM 245 / NBRC 103803 / 6330).